The chain runs to 401 residues: Riboflavin biosynthesis protein RibBA (401 aa).

Residues 1 to 203 (MTDFQFSKVE…IQQLQEYRRK (203 aa)) form a DHBP synthase region. D-ribulose 5-phosphate is bound by residues 30–31 (RE), Asp35, 142–146 (RNGHT), and Glu166. A Mg(2+)-binding site is contributed by Glu31. His145 contributes to the Mg(2+) binding site. Residues 204-401 (HDSLVKQISV…QIKMGHMFNF (198 aa)) are GTP cyclohydrolase II. 254 to 258 (RIHSE) lines the GTP pocket. 3 residues coordinate Zn(2+): Cys259, Cys270, and Cys272. GTP is bound by residues Gln275, 297–299 (EGR), and Thr319. The active-site Proton acceptor; for GTP cyclohydrolase activity is the Asp331. The active-site Nucleophile; for GTP cyclohydrolase activity is Arg333. GTP contacts are provided by Thr354 and Lys359.

In the N-terminal section; belongs to the DHBP synthase family. It in the C-terminal section; belongs to the GTP cyclohydrolase II family. The cofactor is Mg(2+). It depends on Mn(2+) as a cofactor. Requires Zn(2+) as cofactor.

It catalyses the reaction D-ribulose 5-phosphate = (2S)-2-hydroxy-3-oxobutyl phosphate + formate + H(+). The catalysed reaction is GTP + 4 H2O = 2,5-diamino-6-hydroxy-4-(5-phosphoribosylamino)-pyrimidine + formate + 2 phosphate + 3 H(+). It participates in cofactor biosynthesis; riboflavin biosynthesis; 2-hydroxy-3-oxobutyl phosphate from D-ribulose 5-phosphate: step 1/1. It functions in the pathway cofactor biosynthesis; riboflavin biosynthesis; 5-amino-6-(D-ribitylamino)uracil from GTP: step 1/4. Catalyzes the conversion of D-ribulose 5-phosphate to formate and 3,4-dihydroxy-2-butanone 4-phosphate. Its function is as follows. Catalyzes the conversion of GTP to 2,5-diamino-6-ribosylamino-4(3H)-pyrimidinone 5'-phosphate (DARP), formate and pyrophosphate. The sequence is that of Riboflavin biosynthesis protein RibBA from Actinobacillus pleuropneumoniae serotype 7 (strain AP76).